The following is a 520-amino-acid chain: MLVRGLPLRSVLVKGCQPLLSAPREGPGHPRVPTGEGAGMSSHSPRPFKEIPSPGDNGWINLYHFWREKGPKKLHYHHFQNFQKYGPIYREKLGNVESVYIVDPEDVALLFKFEGPHPERFLIPPWTAYHQYFQKPVGVLFKSSDAWKKDRLALNPEVMALESIKNFIPLLDPVSQDFVSLLHRRMEQQGSGKFSGPIIEDLFRFAFESITNVIFGERQGMLDEIVDPEAQRFIDAVYKMFHTSVPMLSLPPDLFRLFRTKTWRDHVAAWDTVFSKAEQYTEKFYQDLKQKRHFDSYPGIFYRLLASNKLPFKDIQANVTEMLAGGVDTTSMSLQWHLYEIARNLRVQEMLREEVLAARRQAQGDTSTMVQMVPLLKASIKETLRLHPIAVTLQRYPQNDLVIRDYMIPAKTLVQVSIYTMGQDPTFFSNPRRFDPTRWLDKNKDLTHFRNLGFGWGVRQCLGRRIAELEMTLFLIHILENFRVEIQHLNDVDSTFGLILIPEKPISFTFWPITRAPPQA.

A mitochondrion-targeting transit peptide spans 1 to 39 (MLVRGLPLRSVLVKGCQPLLSAPREGPGHPRVPTGEGAG). The disordered stretch occupies residues 19-47 (LLSAPREGPGHPRVPTGEGAGMSSHSPRP). C461 is a heme binding site.

It belongs to the cytochrome P450 family. As to quaternary structure, interacts with FDX1/adrenodoxin. The cofactor is heme.

It is found in the mitochondrion inner membrane. The catalysed reaction is 6 reduced [adrenodoxin] + cholesterol + 3 O2 + 6 H(+) = 4-methylpentanal + pregnenolone + 6 oxidized [adrenodoxin] + 4 H2O. It carries out the reaction 2 reduced [adrenodoxin] + cholesterol + O2 + 2 H(+) = (22R)-hydroxycholesterol + 2 oxidized [adrenodoxin] + H2O. The enzyme catalyses (22R)-hydroxycholesterol + 2 reduced [adrenodoxin] + O2 + 2 H(+) = (20R,22R)-20,22-dihydroxycholesterol + 2 oxidized [adrenodoxin] + H2O. It catalyses the reaction (20R,22R)-20,22-dihydroxycholesterol + 2 reduced [adrenodoxin] + O2 + 2 H(+) = 4-methylpentanal + pregnenolone + 2 oxidized [adrenodoxin] + 2 H2O. It participates in lipid metabolism; C21-steroid hormone metabolism. Its pathway is steroid metabolism; cholesterol metabolism. Its function is as follows. A cytochrome P450 monooxygenase that catalyzes the side-chain hydroxylation and cleavage of cholesterol to pregnenolone, the precursor of most steroid hormones. Catalyzes three sequential oxidation reactions of cholesterol, namely the hydroxylation at C22 followed with the hydroxylation at C20 to yield 20R,22R-hydroxycholesterol that is further cleaved between C20 and C22 to yield the C21-steroid pregnenolone and 4-methylpentanal. Mechanistically, uses molecular oxygen inserting one oxygen atom into a substrate and reducing the second into a water molecule. Two electrons are provided by NADPH via a two-protein mitochondrial transfer system comprising flavoprotein FDXR (adrenodoxin/ferredoxin reductase) and nonheme iron-sulfur protein FDX1 or FDX2 (adrenodoxin/ferredoxin). The protein is Cholesterol side-chain cleavage enzyme, mitochondrial (CYP11A1) of Equus caballus (Horse).